A 197-amino-acid polypeptide reads, in one-letter code: Protocatechuate 3,4-dioxygenase alpha chain (197 aa).

A 3,4-dihydroxybenzoate-binding site is contributed by Arg-130.

Belongs to the intradiol ring-cleavage dioxygenase family. As to quaternary structure, the enzyme is an oligomer of 12 copies of the alpha and beta chains. It depends on Fe(3+) as a cofactor.

It carries out the reaction 3,4-dihydroxybenzoate + O2 = 3-carboxy-cis,cis-muconate + 2 H(+). The protein operates within aromatic compound metabolism; beta-ketoadipate pathway; 3-carboxy-cis,cis-muconate from 3,4-dihydroxybenzoate: step 1/1. Functionally, plays an essential role in the utilization of numerous aromatic and hydroaromatic compounds via the beta-ketoadipate pathway. This Burkholderia cepacia (Pseudomonas cepacia) protein is Protocatechuate 3,4-dioxygenase alpha chain (pcaG).